Reading from the N-terminus, the 753-residue chain is Protein transport protein SEC23-1 (753 aa).

Cysteine 56, cysteine 61, cysteine 80, and cysteine 83 together coordinate Zn(2+).

The protein belongs to the SEC23/SEC24 family. SEC23 subfamily. The COPII coat is composed of at least 5 proteins: the SEC23/24 complex, the SEC13/31 complex, and the protein SAR1.

It localises to the cytoplasm. The protein resides in the cytoplasmic vesicle. Its subcellular location is the COPII-coated vesicle membrane. It is found in the endoplasmic reticulum membrane. The protein localises to the golgi apparatus membrane. Functionally, component of the coat protein complex II (COPII) which promotes the formation of transport vesicles from the endoplasmic reticulum (ER). The coat has two main functions, the physical deformation of the endoplasmic reticulum membrane into vesicles and the selection of cargo molecules. The protein is Protein transport protein SEC23-1 (SEC231) of Candida glabrata (strain ATCC 2001 / BCRC 20586 / JCM 3761 / NBRC 0622 / NRRL Y-65 / CBS 138) (Yeast).